Here is a 29-residue protein sequence, read N- to C-terminus: Neurotoxin BmK A3-6 (29 aa).

Contains 3 disulfide bonds. Expressed by the venom gland.

The protein resides in the secreted. The chain is Neurotoxin BmK A3-6 from Olivierus martensii (Manchurian scorpion).